A 416-amino-acid chain; its full sequence is Gamma-glutamyl phosphate reductase (416 aa).

It belongs to the gamma-glutamyl phosphate reductase family.

Its subcellular location is the cytoplasm. It catalyses the reaction L-glutamate 5-semialdehyde + phosphate + NADP(+) = L-glutamyl 5-phosphate + NADPH + H(+). Its pathway is amino-acid biosynthesis; L-proline biosynthesis; L-glutamate 5-semialdehyde from L-glutamate: step 2/2. Its function is as follows. Catalyzes the NADPH-dependent reduction of L-glutamate 5-phosphate into L-glutamate 5-semialdehyde and phosphate. The product spontaneously undergoes cyclization to form 1-pyrroline-5-carboxylate. This is Gamma-glutamyl phosphate reductase from Glaesserella parasuis serovar 5 (strain SH0165) (Haemophilus parasuis).